Reading from the N-terminus, the 626-residue chain is MADQRMDISSTISDFMSPGPTDLLSGSLSTSGVDCNRKRKGSATDYQESMDTDKDDPHGRLEYAEHQGRIKNAREAHSQIEKRRRDKMNSFIDELASLVPTCNAMSRKLDKLTVLRMAVQHMKTLRGATNPYTEANYKPTSLSDDELKHLILRAADGFLFVVGCDRGKILFVSESVFKILNYSQNDLIGQSLFDYLHPKDIAKVKEQLSSSDTAPRERLIDAKTGLPVKTDITPGPSRLCSGARRSFFCRMKCNRPSVKVEDKDFASTCSKKKADRKSFCTIHSTGYLKSWPPTKMGLDEDSEPDNEGCNLSCLVAIGRLHSHMVPQPVNGEIRVKSMEYVSRHAIDGKFVFVDQRATAILAYLPQELLGTSCYEYFHQDDIGHLAECHRQVLQTREKITTNCYKFKIKDGSFITLRSRWFSFMNPWTKEVEYIVSTNTVVLANVLEGGDPTFPQLTASPHSMDSMLPSGEGGPKRTHPTVPGIPGGTRAGAGKIGRMIAEEIMEIHRIRGSSPSSCGSSPLNITSTPPPDASSPGGKKILNGGTPDIPSAGLLPGQAQETPGYPYSDSSSILGENPHIGIDMIDNDQGSSSPSNDEAAMAVIMSLLEADAGLGGPVDFSDLPWPL.

A disordered region spans residues 1-58 (MADQRMDISSTISDFMSPGPTDLLSGSLSTSGVDCNRKRKGSATDYQESMDTDKDDPH). Serine 17 bears the Phosphoserine; by GSK3-beta mark. The segment covering 17–32 (SPGPTDLLSGSLSTSG) has biased composition (low complexity). Residue threonine 21 is modified to Phosphothreonine; by GSK3-beta. The Nuclear localization signal signature appears at 36–41 (NRKRKG). The bHLH domain occupies 72-125 (NAREAHSQIEKRRRDKMNSFIDELASLVPTCNAMSRKLDKLTVLRMAVQHMKTL). Serine 78 carries the phosphoserine modification. Serine 90 bears the Phosphoserine; by CK2 mark. A Nuclear export signal 1 motif is present at residues 142 to 152 (LSDDELKHLIL). A PAS 1 domain is found at 143–215 (SDDELKHLIL…EQLSSSDTAP (73 aa)). A Glycyl lysine isopeptide (Lys-Gly) (interchain with G-Cter in SUMO2 and SUMO3) cross-link involves residue lysine 252. Lysine 259 participates in a covalent cross-link: Glycyl lysine isopeptide (Lys-Gly) (interchain with G-Cter in SUMO); alternate. Lysine 259 participates in a covalent cross-link: Glycyl lysine isopeptide (Lys-Gly) (interchain with G-Cter in SUMO2); alternate. In terms of domain architecture, PAS 2 spans 326–396 (PQPVNGEIRV…ECHRQVLQTR (71 aa)). The Nuclear export signal 2 signature appears at 361 to 369 (LAYLPQELL). A PAC domain is found at 401-444 (TNCYKFKIKDGSFITLRSRWFSFMNPWTKEVEYIVSTNTVVLAN). Disordered stretches follow at residues 459-492 (SPHS…RAGA) and 511-595 (GSSP…SPSN). An interaction with CIART region spans residues 508-588 (RIRGSSPSSC…IGIDMIDNDQ (81 aa)). Over residues 511–521 (GSSPSSCGSSP) the composition is skewed to low complexity. Lysine 538 carries the N6-acetyllysine modification.

Component of the circadian clock oscillator which includes the CRY1/2 proteins, CLOCK or NPAS2, BMAL1 or BMAL2, CSNK1D and/or CSNK1E, TIMELESS and the PER1/2/3 proteins. Forms a heterodimer with CLOCK. The CLOCK-BMAL1 heterodimer is required for E-box-dependent transactivation, for CLOCK nuclear translocation and degradation, and, for phosphorylation of both CLOCK and BMAL1. Part of a nuclear complex which also includes RACK1 and PRKCA; RACK1 and PRKCA are recruited to the complex in a circadian manner. Interacts with NPAS2. Interacts with EZH2. Interacts with SUMO3. Interacts with SIRT1. Interacts with AHR. Interacts with ID1, ID2 and ID3. Interacts with DDX4. Interacts with OGT. Interacts with EED and SUZ12. Interacts with MTA1. Interacts with CIART. Interacts with HSP90. Interacts with KAT2B and EP300. Interacts with BHLHE40/DEC1 and BHLHE41/DEC2. Interacts with RELB and the interaction is enhanced in the presence of CLOCK. Interacts with PER1, PER2, CRY1 and CRY2 and this interaction requires a translocation to the nucleus. Interaction of the CLOCK-BMAL1 heterodimer with PER or CRY inhibits transcription activation. Interaction of the CLOCK-BMAL1 with CRY1 is independent of DNA but with PER2 is off DNA. The CLOCK-BMAL1 heterodimer interacts with GSK3B. Interacts with KDM5A. Interacts with KMT2A; in a circadian manner. Interacts with UBE3A. Interacts with PRKCG. Interacts with MAGEL2. Interacts with NCOA2. Interacts with THRAP3. The CLOCK-BMAL1 heterodimer interacts with PASD1. Interacts with PASD1. Interacts with USP9X. Interacts with PIWIL2 (via PIWI domain). Interacts with HDAC3. Interacts with HNF4A. Post-translationally, ubiquitinated, leading to its proteasomal degradation. Deubiquitinated by USP9X. In terms of processing, O-glycosylated; contains O-GlcNAc. O-glycosylation by OGT prevents protein degradation by inhibiting ubiquitination. It also stabilizes the CLOCK-BMAL1 heterodimer thereby increasing CLOCK-BMAL1-mediated transcription of genes in the negative loop of the circadian clock such as PER1/2/3 and CRY1/2. Acetylated on Lys-538 by CLOCK during the repression phase of the circadian cycle. Acetylation facilitates recruitment of CRY1 protein and initiates the repression phase of the circadian cycle. Acetylated at Lys-538 by KAT5 during the activation phase of the cycle, leading to recruitment of the positive transcription elongation factor b (P-TEFb) and BRD4, followed by productive elongation of circadian transcripts. Deacetylated by SIRT1, which may result in decreased protein stability. Post-translationally, phosphorylated upon dimerization with CLOCK. Phosphorylation enhances the transcriptional activity, alters the subcellular localization and decreases the stability of the CLOCK-BMAL1 heterodimer by promoting its degradation. Phosphorylation shows circadian variations in the liver with a peak between CT10 to CT14. Phosphorylation at Ser-90 by CK2 is essential for its nuclear localization, its interaction with CLOCK and controls CLOCK nuclear entry. Dephosphorylation at Ser-78 is important for dimerization with CLOCK and transcriptional activity. In terms of processing, sumoylated on Lys-259 upon dimerization with CLOCK. Predominantly conjugated to poly-SUMO2/3 rather than SUMO1 and the level of these conjugates undergo rhythmic variation, peaking at CT9-CT12. Sumoylation localizes it exclusively to the PML body and promotes its ubiquitination in the PML body, ubiquitin-dependent proteasomal degradation and the transcriptional activity of the CLOCK-BMAL1 heterodimer. Undergoes lysosome-mediated degradation in a time-dependent manner in the liver.

It localises to the nucleus. It is found in the cytoplasm. The protein resides in the PML body. In terms of biological role, transcriptional activator which forms a core component of the circadian clock. The circadian clock, an internal time-keeping system, regulates various physiological processes through the generation of approximately 24 hour circadian rhythms in gene expression, which are translated into rhythms in metabolism and behavior. It is derived from the Latin roots 'circa' (about) and 'diem' (day) and acts as an important regulator of a wide array of physiological functions including metabolism, sleep, body temperature, blood pressure, endocrine, immune, cardiovascular, and renal function. Consists of two major components: the central clock, residing in the suprachiasmatic nucleus (SCN) of the brain, and the peripheral clocks that are present in nearly every tissue and organ system. Both the central and peripheral clocks can be reset by environmental cues, also known as Zeitgebers (German for 'timegivers'). The predominant Zeitgeber for the central clock is light, which is sensed by retina and signals directly to the SCN. The central clock entrains the peripheral clocks through neuronal and hormonal signals, body temperature and feeding-related cues, aligning all clocks with the external light/dark cycle. Circadian rhythms allow an organism to achieve temporal homeostasis with its environment at the molecular level by regulating gene expression to create a peak of protein expression once every 24 hours to control when a particular physiological process is most active with respect to the solar day. Transcription and translation of core clock components (CLOCK, NPAS2, BMAL1, BMAL2, PER1, PER2, PER3, CRY1 and CRY2) plays a critical role in rhythm generation, whereas delays imposed by post-translational modifications (PTMs) are important for determining the period (tau) of the rhythms (tau refers to the period of a rhythm and is the length, in time, of one complete cycle). A diurnal rhythm is synchronized with the day/night cycle, while the ultradian and infradian rhythms have a period shorter and longer than 24 hours, respectively. Disruptions in the circadian rhythms contribute to the pathology of cardiovascular diseases, cancer, metabolic syndromes and aging. A transcription/translation feedback loop (TTFL) forms the core of the molecular circadian clock mechanism. Transcription factors, CLOCK or NPAS2 and BMAL1 or BMAL2, form the positive limb of the feedback loop, act in the form of a heterodimer and activate the transcription of core clock genes and clock-controlled genes (involved in key metabolic processes), harboring E-box elements (5'-CACGTG-3') within their promoters. The core clock genes: PER1/2/3 and CRY1/2 which are transcriptional repressors form the negative limb of the feedback loop and interact with the CLOCK|NPAS2-BMAL1|BMAL2 heterodimer inhibiting its activity and thereby negatively regulating their own expression. This heterodimer also activates nuclear receptors NR1D1/2 and RORA/B/G, which form a second feedback loop and which activate and repress BMAL1 transcription, respectively. BMAL1 positively regulates myogenesis and negatively regulates adipogenesis via the transcriptional control of the genes of the canonical Wnt signaling pathway. Plays a role in normal pancreatic beta-cell function; regulates glucose-stimulated insulin secretion via the regulation of antioxidant genes NFE2L2/NRF2 and its targets SESN2, PRDX3, CCLC and CCLM. Negatively regulates the mTORC1 signaling pathway; regulates the expression of MTOR and DEPTOR. Controls diurnal oscillations of Ly6C inflammatory monocytes; rhythmic recruitment of the PRC2 complex imparts diurnal variation to chemokine expression that is necessary to sustain Ly6C monocyte rhythms. Regulates the expression of HSD3B2, STAR, PTGS2, CYP11A1, CYP19A1 and LHCGR in the ovary and also the genes involved in hair growth. Plays an important role in adult hippocampal neurogenesis by regulating the timely entry of neural stem/progenitor cells (NSPCs) into the cell cycle and the number of cell divisions that take place prior to cell-cycle exit. Regulates the circadian expression of CIART and KLF11. The CLOCK-BMAL1 heterodimer regulates the circadian expression of SERPINE1/PAI1, VWF, B3, CCRN4L/NOC, NAMPT, DBP, MYOD1, PPARGC1A, PPARGC1B, SIRT1, GYS2, F7, NGFR, GNRHR, BHLHE40/DEC1, ATF4, MTA1, KLF10 and also genes implicated in glucose and lipid metabolism. Promotes rhythmic chromatin opening, regulating the DNA accessibility of other transcription factors. May play a role in spermatogenesis; contributes to the chromatoid body assembly and physiology. The NPAS2-BMAL1 heterodimer positively regulates the expression of MAOA, F7 and LDHA and modulates the circadian rhythm of daytime contrast sensitivity by regulating the rhythmic expression of adenylate cyclase type 1 (ADCY1) in the retina. The preferred binding motif for the CLOCK-BMAL1 heterodimer is 5'-CACGTGA-3', which contains a flanking adenine nucleotide at the 3-prime end of the canonical 6-nucleotide E-box sequence. CLOCK specifically binds to the half-site 5'-CAC-3', while BMAL1 binds to the half-site 5'-GTGA-3'. The CLOCK-BMAL1 heterodimer also recognizes the non-canonical E-box motifs 5'-AACGTGA-3' and 5'-CATGTGA-3'. Essential for the rhythmic interaction of CLOCK with ASS1 and plays a critical role in positively regulating CLOCK-mediated acetylation of ASS1. Plays a role in protecting against lethal sepsis by limiting the expression of immune checkpoint protein CD274 in macrophages in a PKM2-dependent manner. Regulates the diurnal rhythms of skeletal muscle metabolism via transcriptional activation of genes promoting triglyceride synthesis (DGAT2) and metabolic efficiency (COQ10B). In Rattus norvegicus (Rat), this protein is Basic helix-loop-helix ARNT-like protein 1.